The chain runs to 1992 residues: Fer-1-like protein 4 (1992 aa).

C2 domains follow at residues 1–97 (MALT…VLRE), 214–330 (PRGD…QKWA), and 369–502 (TSSD…AGFN). Residues 1-1952 (MALTVCVRHL…PLKTFIFFIW (1952 aa)) lie on the Extracellular side of the membrane. Disordered stretches follow at residues 554–606 (RVEP…APEI), 661–686 (AGRQEEQSGQGSRADEGSESSTLEVQ), and 691–710 (SEDRGAGQEEQELLGTPAQW). A compositionally biased stretch (polar residues) spans 559-569 (PSQTTQRSGLS). Residues 572 to 581 (TGKKKKKKEK) show a composition bias toward basic residues. 2 C2 domains span residues 951–1078 (PSSG…ELQF) and 1126–1250 (ISGH…PQEE). Disordered regions lie at residues 1245–1276 (EDPQEEEETEEETRDLVPHGPQGEKSLPEAGT) and 1322–1361 (FQGQPSSDDEMDEAGDADGTHLISGDREAQEQGETDSKVS). 2 stretches are compositionally biased toward acidic residues: residues 1247-1257 (PQEEEETEEET) and 1328-1337 (SDDEMDEAGD). C2 domains lie at 1430 to 1549 (SFSE…ANCG) and 1675 to 1824 (VPAP…EHCS). Asp1464, Asp1470, Asp1519, Asp1521, Asp1527, Asp1795, Ser1798, and Asp1801 together coordinate Ca(2+). The disordered stretch occupies residues 1862 to 1885 (EAREAQAGKKRKRKRRAGRPEDLE). Residues 1869–1878 (GKKRKRKRRA) show a composition bias toward basic residues. Residues 1953-1973 (RRYWRILVLLLLALITIFLLL) form a helical membrane-spanning segment. The Cytoplasmic segment spans residues 1974–1992 (VFYTIPGQISEVIFSPVHK).

Requires Ca(2+) as cofactor.

The protein localises to the membrane. The sequence is that of Fer-1-like protein 4 (Fer1l4) from Mus musculus (Mouse).